Reading from the N-terminus, the 872-residue chain is Alanine--tRNA ligase (872 aa).

Zn(2+) contacts are provided by H567, H571, C669, and H673.

The protein belongs to the class-II aminoacyl-tRNA synthetase family. It depends on Zn(2+) as a cofactor.

The protein localises to the cytoplasm. It catalyses the reaction tRNA(Ala) + L-alanine + ATP = L-alanyl-tRNA(Ala) + AMP + diphosphate. Its function is as follows. Catalyzes the attachment of alanine to tRNA(Ala) in a two-step reaction: alanine is first activated by ATP to form Ala-AMP and then transferred to the acceptor end of tRNA(Ala). Also edits incorrectly charged Ser-tRNA(Ala) and Gly-tRNA(Ala) via its editing domain. This chain is Alanine--tRNA ligase, found in Streptococcus pneumoniae serotype 2 (strain D39 / NCTC 7466).